Here is a 220-residue protein sequence, read N- to C-terminus: UPF0319 protein Asuc_1002 (220 aa).

An N-terminal signal peptide occupies residues 1–21 (MKFRLAAVAAAALLASSASFA).

It belongs to the UPF0319 family.

In Actinobacillus succinogenes (strain ATCC 55618 / DSM 22257 / CCUG 43843 / 130Z), this protein is UPF0319 protein Asuc_1002.